The following is a 451-amino-acid chain: REST corepressor 3 (451 aa).

The interval 1 to 55 (MPGMMEKGPELLGKSRSANGGAKSPAGGGGSSANGGLHFSEPESGCSSDDEHGDV) is disordered. Residues 55–139 (VGMRVGAEYQ…KSLADLPNFT (85 aa)) enclose the ELM2 domain. Lys-76 is covalently cross-linked (Glycyl lysine isopeptide (Lys-Gly) (interchain with G-Cter in SUMO2)). The region spanning 140-191 (PFPDEWTVEDKVLFEQAFSFHGKSFHRIQQMLPDKTIASLVKYYYSWKKTRS) is the SANT domain. The disordered stretch occupies residues 204-275 (ANRHNQGDSD…SQRSKCRPPK (72 aa)). A phosphoserine mark is found at Ser-212 and Ser-227. The segment covering 218–240 (EAHPMDGNDSDYDPKKEAKREGN) has biased composition (basic and acidic residues). A Glycyl lysine isopeptide (Lys-Gly) (interchain with G-Cter in SUMO2) cross-link involves residue Lys-249. Residues 261–273 (QHRHHSQRSKCRP) show a composition bias toward basic residues. A coiled-coil region spans residues 293 to 329 (AANTILRQLDMELISLKRQVQNAKQVNSALKQKMEGG). The disordered stretch occupies residues 333 to 451 (FKPPEAQTPQ…IQTDSQPSLH (119 aa)). Residues 349–361 (PSPPAPSSTPTPT) are compositionally biased toward pro residues. Positions 375-384 (RPTLPAAPAL) are enriched in low complexity. An asymmetric dimethylarginine mark is found at Arg-401 and Arg-413. Polar residues predominate over residues 431-451 (VGGQQPPSLIGIQTDSQPSLH).

The protein belongs to the CoREST family.

It is found in the nucleus. Functionally, may act as a component of a corepressor complex that represses transcription. The protein is REST corepressor 3 (Rcor3) of Mus musculus (Mouse).